The chain runs to 241 residues: Eukaryotic translation initiation factor 6 (241 aa).

The protein belongs to the eIF-6 family. In terms of assembly, monomer. Associates with the 60S ribosomal subunit.

The protein resides in the cytoplasm. It localises to the nucleus. Its subcellular location is the nucleolus. In terms of biological role, binds to the 60S ribosomal subunit and prevents its association with the 40S ribosomal subunit to form the 80S initiation complex in the cytoplasm. Is also involved in ribosome biogenesis. Associates with pre-60S subunits in the nucleus and is involved in its nuclear export. This is Eukaryotic translation initiation factor 6 from Encephalitozoon cuniculi (strain GB-M1) (Microsporidian parasite).